The sequence spans 385 residues: MAELRQIPGGRETPQGELRPEVVEDEVPRSPVAEEPGGGGSNSSEAKLSPREEEELDPRIQEELEHLNQASEEINQVELQLDEARTTYRRILQESARKLNTQGSHLGSCIEKARPYYEARRLAKEAQQETQKAALRYERAVSMHNAAREMVFVAEQGVMADKNRLDPTWQEMLNHATCKVNEAEEERLRGEREHQRVTRLCQQAEARVQALQKTLRRAIGKSRPYFELKAQFSQILEEHKAKVTELEQQVAQAKTRYSVALRNLEQISEQIHARRRGQPAHTPGQRRSSPVGAEAGPDGGEDADSGIIEGAEGGGLEEGVSLGPGAAPDTDTLSLLSLRTVASDLQKCDSVEHLRGLSDHTSLDGQELGPRSGGRGGRHQRSISL.

The segment at 1–58 is disordered; that stretch reads MAELRQIPGGRETPQGELRPEVVEDEVPRSPVAEEPGGGGSNSSEAKLSPREEEELDP. A Phosphothreonine modification is found at threonine 13. Residues 18-28 show a composition bias toward basic and acidic residues; sequence LRPEVVEDEVP. Phosphoserine occurs at positions 30 and 49. Coiled coils occupy residues 59–140 and 169–272; these read RIQE…YERA and WQEM…EQIH. Residues 272 to 328 are disordered; it reads HARRRGQPAHTPGQRRSSPVGAEAGPDGGEDADSGIIEGAEGGGLEEGVSLGPGAAP. A compositionally biased stretch (low complexity) spans 318–328; the sequence is EGVSLGPGAAP. A phosphoserine mark is found at serine 343, serine 350, serine 358, and serine 362. Positions 359–385 are disordered; sequence DHTSLDGQELGPRSGGRGGRHQRSISL. The span at 376–385 shows a compositional bias: basic residues; that stretch reads GGRHQRSISL.

This sequence belongs to the SH3BP5 family.

Functionally, functions as a guanine nucleotide exchange factor (GEF) for RAB11A. This is SH3 domain-binding protein 5-like (SH3BP5L) from Bos taurus (Bovine).